The following is a 680-amino-acid chain: Pescadillo homolog (680 aa).

The segment at 315–336 (GEDEKPKAITNGEGESETPTDA) is disordered. Positions 359 to 471 (DPSQLFANCT…ELKEPNQYAP (113 aa)) constitute a BRCT domain. The segment at 494–680 (VPLEEQQTEA…ERKMAKGKAT (187 aa)) is disordered. 3 stretches are compositionally biased toward acidic residues: residues 511–530 (DVED…DDEA), 543–556 (GSDD…EEAD), and 565–576 (AEVDDASEDDEQ). 3 stretches are compositionally biased toward basic and acidic residues: residues 597–610 (KASE…DPKS), 617–635 (RKEL…ERAK), and 654–664 (NKKDAESEKLR). Residues 609–680 (KSKAKQQKRK…ERKMAKGKAT (72 aa)) are a coiled coil. Residues 665 to 680 (EKRRRIERKMAKGKAT) are compositionally biased toward basic residues.

Belongs to the pescadillo family. In terms of assembly, component of the NOP7 complex, composed of ERB1, NOP7 and YTM1. The complex is held together by ERB1, which interacts with NOP7 via its N-terminal domain and with YTM1 via a high-affinity interaction between the seven-bladed beta-propeller domains of the 2 proteins. The NOP7 complex associates with the 66S pre-ribosome.

The protein resides in the nucleus. It localises to the nucleolus. It is found in the nucleoplasm. Component of the NOP7 complex, which is required for maturation of the 25S and 5.8S ribosomal RNAs and formation of the 60S ribosome. The protein is Pescadillo homolog of Pyricularia oryzae (strain 70-15 / ATCC MYA-4617 / FGSC 8958) (Rice blast fungus).